The primary structure comprises 353 residues: Photosystem II D2 protein (353 aa).

Thr-2 is subject to N-acetylthreonine. A Phosphothreonine modification is found at Thr-2. Residues 41–61 (CAYFALGGWFTGTTFVTSWYT) form a helical membrane-spanning segment. His-118 contacts chlorophyll a. The helical transmembrane segment at 125–141 (GFMLRQFELARSVQLRP) threads the bilayer. Positions 130 and 143 each coordinate pheophytin a. Residues 153-166 (VFVSVFLIYPLGQS) traverse the membrane as a helical segment. His-198 serves as a coordination point for chlorophyll a. Residues 208–228 (AALLCAIHGATVENTLFEDGD) traverse the membrane as a helical segment. A plastoquinone is bound by residues His-215 and Phe-262. A Fe cation-binding site is contributed by His-215. Residue His-269 participates in Fe cation binding. The helical transmembrane segment at 279 to 295 (GLWMSALGVVGLALNLR) threads the bilayer.

Belongs to the reaction center PufL/M/PsbA/D family. PSII is composed of 1 copy each of membrane proteins PsbA, PsbB, PsbC, PsbD, PsbE, PsbF, PsbH, PsbI, PsbJ, PsbK, PsbL, PsbM, PsbT, PsbX, PsbY, PsbZ, Psb30/Ycf12, at least 3 peripheral proteins of the oxygen-evolving complex and a large number of cofactors. It forms dimeric complexes. The D1/D2 heterodimer binds P680, chlorophylls that are the primary electron donor of PSII, and subsequent electron acceptors. It shares a non-heme iron and each subunit binds pheophytin, quinone, additional chlorophylls, carotenoids and lipids. There is also a Cl(-1) ion associated with D1 and D2, which is required for oxygen evolution. The PSII complex binds additional chlorophylls, carotenoids and specific lipids. serves as cofactor.

It is found in the plastid. The protein localises to the chloroplast thylakoid membrane. It catalyses the reaction 2 a plastoquinone + 4 hnu + 2 H2O = 2 a plastoquinol + O2. In terms of biological role, photosystem II (PSII) is a light-driven water:plastoquinone oxidoreductase that uses light energy to abstract electrons from H(2)O, generating O(2) and a proton gradient subsequently used for ATP formation. It consists of a core antenna complex that captures photons, and an electron transfer chain that converts photonic excitation into a charge separation. The D1/D2 (PsbA/PsbD) reaction center heterodimer binds P680, the primary electron donor of PSII as well as several subsequent electron acceptors. D2 is needed for assembly of a stable PSII complex. In Nandina domestica (Heavenly bamboo), this protein is Photosystem II D2 protein.